Consider the following 277-residue polypeptide: Diaminopimelate epimerase (277 aa).

Residues N15 and N74 each contribute to the substrate site. The active-site Proton donor is the C83. Residues 84–85, N159, N194, and 212–213 contribute to the substrate site; these read GN and ER. The Proton acceptor role is filled by C221. 222–223 is a substrate binding site; it reads GT.

The protein belongs to the diaminopimelate epimerase family. In terms of assembly, homodimer.

Its subcellular location is the cytoplasm. The catalysed reaction is (2S,6S)-2,6-diaminopimelate = meso-2,6-diaminopimelate. It participates in amino-acid biosynthesis; L-lysine biosynthesis via DAP pathway; DL-2,6-diaminopimelate from LL-2,6-diaminopimelate: step 1/1. Functionally, catalyzes the stereoinversion of LL-2,6-diaminopimelate (L,L-DAP) to meso-diaminopimelate (meso-DAP), a precursor of L-lysine and an essential component of the bacterial peptidoglycan. Involved in the succinylase branch of the diaminopimelate biosynthesis. The polypeptide is Diaminopimelate epimerase (Corynebacterium glutamicum (strain ATCC 13032 / DSM 20300 / JCM 1318 / BCRC 11384 / CCUG 27702 / LMG 3730 / NBRC 12168 / NCIMB 10025 / NRRL B-2784 / 534)).